A 157-amino-acid chain; its full sequence is 6,7-dimethyl-8-ribityllumazine synthase (157 aa).

5-amino-6-(D-ribitylamino)uracil is bound by residues Phe-22, Ala-57–Glu-59, and Thr-81–Ile-83. Position 86 to 87 (Gly-86 to Thr-87) interacts with (2S)-2-hydroxy-3-oxobutyl phosphate. His-89 acts as the Proton donor in catalysis. Phe-114 serves as a coordination point for 5-amino-6-(D-ribitylamino)uracil. Arg-128 lines the (2S)-2-hydroxy-3-oxobutyl phosphate pocket.

Belongs to the DMRL synthase family. Forms an icosahedral capsid composed of 60 subunits, arranged as a dodecamer of pentamers.

It catalyses the reaction (2S)-2-hydroxy-3-oxobutyl phosphate + 5-amino-6-(D-ribitylamino)uracil = 6,7-dimethyl-8-(1-D-ribityl)lumazine + phosphate + 2 H2O + H(+). It participates in cofactor biosynthesis; riboflavin biosynthesis; riboflavin from 2-hydroxy-3-oxobutyl phosphate and 5-amino-6-(D-ribitylamino)uracil: step 1/2. Functionally, catalyzes the formation of 6,7-dimethyl-8-ribityllumazine by condensation of 5-amino-6-(D-ribitylamino)uracil with 3,4-dihydroxy-2-butanone 4-phosphate. This is the penultimate step in the biosynthesis of riboflavin. This is 6,7-dimethyl-8-ribityllumazine synthase from Haemophilus influenzae (strain ATCC 51907 / DSM 11121 / KW20 / Rd).